The chain runs to 564 residues: MARPKNVKHIFVTGGVVSSLGKGILSASLGLLLKSRGLRVAIQKYDPYINVDPGTMSPYQHGEVYVTDDGAETDLDLGHYERFLDEATSQQSNLTMGRVYKSVIDKERQGEYLGGTVQVVPHVIDEIKERMGELAKNSNLDILITEIGGTIGDIESLPFLEAMRQLKLDFGPKNMLNIHLTLVPYIKAACELKTKPTQHSVKMLLETGIQPDILVCRSEKPLSREIKNKVGHFCNLHELDVIGLSDCDTIYGVPLMLLNEKLDIRVLKKLGLKKYKEPDLAYWKEFCNKVQHPTDGEVTIAICGKYTEYPDAYKSILESLVHAGADNNVRVHVRLIRAEDAEENGSDVKTALEGVHGVLVAPGFGDRGIEGKIRFVQYARENNIPFLGICLGMQCASIEFARNVCGLSEANSTEFSKRCRQPVIDLMEHQKKVKEKGGTMRLGSYPCILKEGTKAHQAYDKFLINERHRHRYEFNNEYRRLFEDNGMVFSGTSPNGELVEIVEISNHRWFVAVQFHPEYKSRVHCVHPLFSGFVAAAKEFAHGARQLSFEPEAPSFQVMPGAEN.

The interval 1-272 (MARPKNVKHI…DIRVLKKLGL (272 aa)) is amidoligase domain. Serine 18 lines the CTP pocket. Position 18 (serine 18) interacts with UTP. Residue 19 to 24 (SLGKGI) participates in ATP binding. Tyrosine 59 is a binding site for L-glutamine. ATP is bound at residue aspartate 76. Aspartate 76 and glutamate 146 together coordinate Mg(2+). Residues 153 to 155 (DIE), 193 to 198 (KTKPTQ), and lysine 229 each bind CTP. UTP-binding positions include 193–198 (KTKPTQ) and lysine 229. In terms of domain architecture, Glutamine amidotransferase type-1 spans 299–543 (TIAICGKYTE…VAAAKEFAHG (245 aa)). Glycine 363 lines the L-glutamine pocket. The active-site Nucleophile; for glutamine hydrolysis is the cysteine 390. L-glutamine is bound by residues 391-394 (LGMQ), glutamate 414, and arginine 471. Residues histidine 516 and glutamate 518 contribute to the active site.

It belongs to the CTP synthase family. As to quaternary structure, homotetramer.

It carries out the reaction UTP + L-glutamine + ATP + H2O = CTP + L-glutamate + ADP + phosphate + 2 H(+). It catalyses the reaction L-glutamine + H2O = L-glutamate + NH4(+). The catalysed reaction is UTP + NH4(+) + ATP = CTP + ADP + phosphate + 2 H(+). Its pathway is pyrimidine metabolism; CTP biosynthesis via de novo pathway; CTP from UDP: step 2/2. Allosterically activated by GTP, when glutamine is the substrate; GTP has no effect on the reaction when ammonia is the substrate. The allosteric effector GTP functions by stabilizing the protein conformation that binds the tetrahedral intermediate(s) formed during glutamine hydrolysis. Inhibited by the product CTP, via allosteric rather than competitive inhibition. Functionally, catalyzes the ATP-dependent amination of UTP to CTP with either L-glutamine or ammonia as the source of nitrogen. Regulates intracellular CTP levels through interactions with the four ribonucleotide triphosphates. This chain is CTP synthase, found in Prosthecochloris aestuarii (strain DSM 271 / SK 413).